The following is a 247-amino-acid chain: NifU-like scaffold protein (247 aa).

The protein belongs to the NifU family. In terms of assembly, homodimer.

The protein resides in the plastid. The protein localises to the apicoplast. It functions in the pathway cofactor biosynthesis; iron-sulfur cluster biosynthesis. Functionally, binds and transfers [4Fe-4S] iron-sulfur clusters to target proteins. This is NifU-like scaffold protein from Plasmodium falciparum (isolate 3D7).